The chain runs to 232 residues: Ribosomal RNA large subunit methyltransferase E (232 aa).

Glycine 64, tryptophan 66, aspartate 97, aspartate 113, and aspartate 138 together coordinate S-adenosyl-L-methionine. Lysine 178 acts as the Proton acceptor in catalysis.

This sequence belongs to the class I-like SAM-binding methyltransferase superfamily. RNA methyltransferase RlmE family.

The protein resides in the cytoplasm. The catalysed reaction is uridine(2552) in 23S rRNA + S-adenosyl-L-methionine = 2'-O-methyluridine(2552) in 23S rRNA + S-adenosyl-L-homocysteine + H(+). Functionally, specifically methylates the uridine in position 2552 of 23S rRNA at the 2'-O position of the ribose in the fully assembled 50S ribosomal subunit. The protein is Ribosomal RNA large subunit methyltransferase E of Leptothrix cholodnii (strain ATCC 51168 / LMG 8142 / SP-6) (Leptothrix discophora (strain SP-6)).